The following is a 1139-amino-acid chain: Solute carrier family 12 member 5 (1139 aa).

2 disordered regions span residues methionine 1–tyrosine 63 and threonine 92–glutamine 116. Residues methionine 1–serine 98 lie on the Cytoplasmic side of the membrane. The span at proline 19–proline 45 shows a compositional bias: basic and acidic residues. Residues lysine 46–threonine 55 show a composition bias toward polar residues. The residue at position 57 (threonine 57) is a Phosphothreonine. Residues serine 98–lysine 111 are compositionally biased toward basic and acidic residues. A discontinuously helical transmembrane segment spans residues arginine 99–methionine 120. K(+) is bound at residue lysine 113. The Extracellular segment spans residues glycine 121–proline 129. A helical transmembrane segment spans residues cysteine 130 to glycine 151. Over isoleucine 152–serine 174 the chain is Cytoplasmic. A helical transmembrane segment spans residues alanine 175 to valine 203. Alanine 184 is a chloride binding site. Topologically, residues glycine 204–tyrosine 229 are extracellular. The next 2 helical transmembrane spans lie at leucine 230–leucine 250 and asparagine 251–asparagine 276. At lysine 277 to leucine 402 the chain is on the extracellular side. Cysteine 310 and cysteine 325 are disulfide-bonded. N-linked (GlcNAc...) asparagine glycosylation is found at asparagine 314, asparagine 333, asparagine 351, and asparagine 362. Cysteines 345 and 354 form a disulfide. A helical transmembrane segment spans residues alanine 403 to threonine 420. Methionine 410 lines the K(+) pocket. Chloride-binding residues include tyrosine 414 and valine 415. The Cytoplasmic portion of the chain corresponds to serine 421–isoleucine 429. The chain crosses the membrane as a helical span at residues tyrosine 430–serine 453. Aspartate 446 serves as a coordination point for K(+). The Extracellular portion of the chain corresponds to isoleucine 454–leucine 485. Residues arginine 486–glycine 513 traverse the membrane as a helical segment. Topologically, residues serine 514–glutamine 534 are cytoplasmic. Transmembrane regions (helical) follow at residues alanine 535–glycine 555 and glutamate 556–aspartate 578. Residue glutamate 569 participates in chloride binding. The Cytoplasmic portion of the chain corresponds to glutamate 579–tyrosine 592. A run of 2 helical transmembrane segments spans residues methionine 593–arginine 615 and tyrosine 616–leucine 632. Over methionine 633–serine 1139 the chain is Cytoplasmic. Residues glycine 667–leucine 681 are scissor helix. Residue threonine 929 is modified to Phosphothreonine; by OXSR1 and STK39. The interval methionine 942–isoleucine 1052 is disordered. Residues threonine 945–glycine 962 are compositionally biased toward basic and acidic residues. A compositionally biased stretch (acidic residues) spans threonine 982–valine 994. Positions proline 1003–proline 1012 are enriched in low complexity. Basic and acidic residues predominate over residues aspartate 1023–lysine 1042. Threonine 1030 carries the phosphothreonine; by OXSR1 and STK39 modification. Phosphoserine is present on residues serine 1045, serine 1048, and serine 1049.

This sequence belongs to the SLC12A transporter family. K/Cl co-transporter subfamily. In terms of assembly, homodimer; adopts a domain-swap conformation at the scissor helices connecting the transmembrane domain and C-terminal domain. Heterodimer with K-Cl cotransporters SLC12A6 and SLC12A7. Interacts with AP2A1. Post-translationally, phosphorylated at Thr-929 and Thr-1030 by OXSR1/OSR1 and STK39/SPAK downstream of WNK kinases (WNK1, WNK2, WNK3 or WNK4), inhibiting the potassium-chloride cotransport activity. In terms of tissue distribution, brain specific. Detected in neuronal cells.

The protein localises to the cell membrane. Its subcellular location is the cell projection. It localises to the dendrite. It carries out the reaction K(+)(in) + chloride(in) = K(+)(out) + chloride(out). Inhibited following phosphorylation by OXSR1/OSR1 and STK39/SPAK: phosphorylation takes place downstream of WNK kinases (WNK1, WNK2, WNK3 or WNK4) in response to hyperosmotic stress and subsequent cell shrinkage. Functionally, mediates electroneutral potassium-chloride cotransport in mature neurons and is required for neuronal Cl(-) homeostasis. As major extruder of intracellular chloride, it establishes the low neuronal Cl(-) levels required for chloride influx after binding of GABA-A and glycine to their receptors, with subsequent hyperpolarization and neuronal inhibition. Involved in the regulation of dendritic spine formation and maturation. This chain is Solute carrier family 12 member 5, found in Homo sapiens (Human).